Consider the following 227-residue polypeptide: Agamous-like MADS-box protein AGL8 homolog (227 aa).

The region spanning R3–Y57 is the MADS-box domain. Positions P88–S178 constitute a K-box domain.

Flower specific.

It localises to the nucleus. In terms of biological role, probable transcription factor. The protein is Agamous-like MADS-box protein AGL8 homolog (TDR4) of Solanum lycopersicum (Tomato).